Reading from the N-terminus, the 143-residue chain is Hemoglobin subunit alpha-1 (143 aa).

Ser-2 is subject to N-acetylserine. In terms of domain architecture, Globin spans 2 to 143 (SLSSKDKATV…LALALAEKYR (142 aa)). His-60 lines the O2 pocket. Position 89 (His-89) interacts with heme b.

Belongs to the globin family. As to quaternary structure, hb 1 is a heterotetramer of two alpha-1 and two beta-1 chains. Red blood cells.

Involved in oxygen transport from gills to the various peripheral tissues. This Arctogadus glacialis (Arctic cod) protein is Hemoglobin subunit alpha-1 (hba1).